A 684-amino-acid polypeptide reads, in one-letter code: Glycine--tRNA ligase beta subunit (684 aa).

It belongs to the class-II aminoacyl-tRNA synthetase family. In terms of assembly, tetramer of two alpha and two beta subunits.

It localises to the cytoplasm. It catalyses the reaction tRNA(Gly) + glycine + ATP = glycyl-tRNA(Gly) + AMP + diphosphate. The polypeptide is Glycine--tRNA ligase beta subunit (Pseudomonas fluorescens (strain Pf0-1)).